A 154-amino-acid chain; its full sequence is Interleukin-2 (154 aa).

The N-terminal stretch at 1–20 is a signal peptide; it reads MYKIQLLSCIALTLILVTNS. Cys78 and Cys126 are joined by a disulfide. The N-linked (GlcNAc...) asparagine glycan is linked to Asn111.

It belongs to the IL-2 family.

It localises to the secreted. Functionally, cytokine produced by activated CD4-positive helper T-cells and to a lesser extend activated CD8-positive T-cells and natural killer (NK) cells that plays pivotal roles in the immune response and tolerance. Binds to a receptor complex composed of either the high-affinity trimeric IL-2R (IL2RA/CD25, IL2RB/CD122 and IL2RG/CD132) or the low-affinity dimeric IL-2R (IL2RB and IL2RG). Interaction with the receptor leads to oligomerization and conformation changes in the IL-2R subunits resulting in downstream signaling starting with phosphorylation of JAK1 and JAK3. In turn, JAK1 and JAK3 phosphorylate the receptor to form a docking site leading to the phosphorylation of several substrates including STAT5. This process leads to activation of several pathways including STAT, phosphoinositide-3-kinase/PI3K and mitogen-activated protein kinase/MAPK pathways. Functions as a T-cell growth factor and can increase NK-cell cytolytic activity as well. Promotes strong proliferation of activated B-cells and subsequently immunoglobulin production. Plays a pivotal role in regulating the adaptive immune system by controlling the survival and proliferation of regulatory T-cells, which are required for the maintenance of immune tolerance. Moreover, participates in the differentiation and homeostasis of effector T-cell subsets, including Th1, Th2, Th17 as well as memory CD8-positive T-cells. This chain is Interleukin-2 (IL2), found in Felis catus (Cat).